Reading from the N-terminus, the 363-residue chain is Inositol-3-phosphate synthase (363 aa).

An Isoglutamyl lysine isopeptide (Lys-Gln) (interchain with Q-Cter in protein Pup) cross-link involves residue lysine 65. The NAD(+) site is built by aspartate 70, alanine 129, tyrosine 149, serine 192, aspartate 227, and lysine 240.

This sequence belongs to the myo-inositol 1-phosphate synthase family. The cofactor is NAD(+). In terms of processing, pupylated at Lys-65 by the prokaryotic ubiquitin-like protein Pup, which leads to its degradation by the proteasome.

The catalysed reaction is D-glucose 6-phosphate = 1D-myo-inositol 3-phosphate. Key enzyme in myo-inositol biosynthesis pathway that catalyzes the conversion of glucose 6-phosphate to 1D-myo-inositol 3-phosphate in a NAD-dependent manner. The polypeptide is Inositol-3-phosphate synthase (ino1) (Mycolicibacterium smegmatis (strain ATCC 700084 / mc(2)155) (Mycobacterium smegmatis)).